A 1301-amino-acid chain; its full sequence is Dentin sialophosphoprotein (1301 aa).

Positions 1–15 (MKIITYFCIWAVAWA) are cleaved as a signal peptide. Residues Asn41 and Asn49 are each glycosylated (N-linked (GlcNAc...) asparagine). The interval 55-89 (KESGVLVHEGDRGRQENTQDGHKGEGNGSKWAEVG) is disordered. Basic and acidic residues predominate over residues 62-79 (HEGDRGRQENTQDGHKGE). N-linked (GlcNAc...) asparagine glycosylation is found at Asn81, Asn130, Asn150, Asn190, Asn191, Asn209, and Asn222. Residues 146–165 (AGATNRSNTNGNTDKNTQNG) are compositionally biased toward polar residues. The interval 146 to 171 (AGATNRSNTNGNTDKNTQNGDVGDAG) is disordered. The disordered stretch occupies residues 202 to 1301 (NSCRNEGNTS…SDSNHSTSDD (1100 aa)). Residues 203–221 (SCRNEGNTSEITPQINSKR) show a composition bias toward polar residues. Residues 251–267 (ADEDEDEGSGDDEDEEA) are compositionally biased toward acidic residues. Position 259 is a phosphoserine; by CK1 (Ser259). Polar residues predominate over residues 271 to 280 (KDSSNNSKGQ). An N-linked (GlcNAc...) asparagine glycan is attached at Asn275. 2 stretches are compositionally biased toward basic and acidic residues: residues 281–293 (EGQD…DHDS) and 300–327 (DSKE…KSEE). The residue at position 301 (Ser301) is a Phosphoserine. Asn336 carries N-linked (GlcNAc...) asparagine glycosylation. Positions 340–377 (RIEDTQKLNHRESKRVENRITKESETHAVGKSQDKGIE) are enriched in basic and acidic residues. Residue Asn387 is glycosylated (N-linked (GlcNAc...) asparagine). Positions 388 to 404 (ITKEVGKGNEGKEDKGQ) are enriched in basic and acidic residues. 2 stretches are compositionally biased toward low complexity: residues 439–452 (SNTG…GYDS) and 462–487 (GDDP…NSSS). A Cell attachment site motif is present at residues 488 to 490 (RGD). The span at 488 to 506 (RGDASYNSDESKDNGNGSD) shows a compositional bias: polar residues. Over residues 518-534 (TSDTNNSDSNGNGNNGN) the composition is skewed to low complexity. The span at 536–549 (DNDKSDSGKGKSDS) shows a compositional bias: basic and acidic residues. Residues 555-564 (SDSSNSSDSS) are compositionally biased toward low complexity. The segment covering 581 to 595 (DSSDSDSSDSSDSDS) has biased composition (acidic residues). Over residues 596–619 (SDSSNSSDSSDSSDSSDSSDSSDS) the composition is skewed to low complexity. Basic and acidic residues predominate over residues 620–642 (SDSKSDSSKSESDSSDSDSKSDS). Low complexity-rich tracts occupy residues 643–705 (SDSN…SDSS), 715–1264 (SSDS…STSD), 1272–1284 (QSKS…NGSD), and 1292–1301 (SDSNHSTSDD).

Interacts with FBLN7. In terms of processing, DSP is glycosylated. As to expression, expressed in teeth. DPP is synthesized by odontoblast and transiently expressed by pre-ameloblasts.

Its subcellular location is the secreted. It localises to the extracellular space. The protein resides in the extracellular matrix. DSP may be an important factor in dentinogenesis. DPP may bind high amount of calcium and facilitate initial mineralization of dentin matrix collagen as well as regulate the size and shape of the crystals. In Homo sapiens (Human), this protein is Dentin sialophosphoprotein (DSPP).